Consider the following 235-residue polypeptide: Small ribosomal subunit protein eS4 (235 aa).

In terms of domain architecture, S4 RNA-binding spans 37-100; sequence LPLGIIIRDI…NETYRMFQDE (64 aa).

This sequence belongs to the eukaryotic ribosomal protein eS4 family.

This Methanosarcina barkeri (strain Fusaro / DSM 804) protein is Small ribosomal subunit protein eS4.